Reading from the N-terminus, the 114-residue chain is UPF0342 protein SH1117 (114 aa).

Belongs to the UPF0342 family.

The polypeptide is UPF0342 protein SH1117 (Staphylococcus haemolyticus (strain JCSC1435)).